The primary structure comprises 255 residues: CD320 antigen (255 aa).

Residues 1–29 (MNGWVARGLARRAAALGLGLRVLLCFGLC) form the signal peptide. The Extracellular segment spans residues 30 to 203 (LEIAPTPIQT…SVQSGNRNVY (174 aa)). 2 consecutive LDL-receptor class A domains span residues 52–89 (SCPP…EECG) and 120–157 (SCPE…LGCG). Cystine bridges form between Cys-53–Cys-66, Cys-60–Cys-79, Cys-73–Cys-88, Cys-121–Cys-134, Cys-128–Cys-147, and Cys-141–Cys-156. Ca(2+) is bound by residues Trp-71, Asp-74, Asp-76, Asp-78, Asp-84, and Glu-85. Ca(2+)-binding residues include Trp-139, Asp-142, His-144, Asp-146, Asp-152, and Glu-153. N-linked (GlcNAc...) asparagine glycosylation is found at Asn-177 and Asn-183. Residues 204–224 (GIIAAVAVLSISLAAGILFAL) traverse the membrane as a helical segment. At 225 to 255 (SRLCAQGCLAPLGLLVSMKGSLQPEKKTSVL) the chain is on the cytoplasmic side.

In terms of assembly, interacts (via LDL-receptor class A domains) with TCN2.

The protein resides in the cell membrane. Receptor for transcobalamin saturated with cobalamin (TCbl). Plays an important role in cobalamin uptake. Plasma membrane protein that is expressed on follicular dendritic cells (FDC) and mediates interaction with germinal center B cells. Functions as a costimulator to promote B cell responses to antigenic stimuli; promotes B cell differentiation and proliferation. Germinal center-B (GC-B) cells differentiate into memory B-cells and plasma cells (PC) through interaction with T-cells and follicular dendritic cells (FDC). CD320 augments the proliferation of PC precursors generated by IL-10. This chain is CD320 antigen (CD320), found in Bos taurus (Bovine).